A 505-amino-acid polypeptide reads, in one-letter code: Elsinochrome transporter 1 (505 aa).

The span at M1–P10 shows a compositional bias: gly residues. Residues M1 to L25 form a disordered region. A helical transmembrane segment spans residues F35–L55. N-linked (GlcNAc...) asparagine glycosylation is found at N64 and N80. The interval D221 to T295 is disordered. Positions T255–S267 are enriched in low complexity. Helical transmembrane passes span V313–E333, L348–V368, K391–A411, A417–L437, V449–F469, and V479–P499.

The protein belongs to the major facilitator superfamily. Nitrate/nitrite porter (TC 2.A.1.8) family.

Its subcellular location is the cell membrane. Its function is as follows. Major facilitator-type transporter; part of the gene cluster that mediates the biosynthesis of elsinochromes, pigments consisting of at least four interconvertible tautomers (A, B, C and D) that have a core phenolic quinone to which various side chains are attached and which play an important role in fungal pathogenesis. Once elsinochrome is synthesized, it must be exported outside the fungal cells, which is probably accomplished by the ECT1 transporter, to avoid toxicity. The protein is Elsinochrome transporter 1 of Elsinoe fawcettii (Citrus scab fungus).